Consider the following 499-residue polypeptide: Probable cytosol aminopeptidase (499 aa).

The Mn(2+) site is built by Lys269 and Asp274. Lys281 is an active-site residue. 3 residues coordinate Mn(2+): Asp292, Asp351, and Glu353. Arg355 is an active-site residue.

It belongs to the peptidase M17 family. Requires Mn(2+) as cofactor.

The protein resides in the cytoplasm. It carries out the reaction Release of an N-terminal amino acid, Xaa-|-Yaa-, in which Xaa is preferably Leu, but may be other amino acids including Pro although not Arg or Lys, and Yaa may be Pro. Amino acid amides and methyl esters are also readily hydrolyzed, but rates on arylamides are exceedingly low.. The catalysed reaction is Release of an N-terminal amino acid, preferentially leucine, but not glutamic or aspartic acids.. Its function is as follows. Presumably involved in the processing and regular turnover of intracellular proteins. Catalyzes the removal of unsubstituted N-terminal amino acids from various peptides. This chain is Probable cytosol aminopeptidase, found in Haemophilus ducreyi (strain 35000HP / ATCC 700724).